The sequence spans 693 residues: Elongation factor G (693 aa).

The tr-type G domain maps to 8–282 (EKTRNIGIMA…AVIDYLPSPL (275 aa)). Residues 17-24 (AHVDAGKT), 81-85 (DTPGH), and 135-138 (NKMD) each bind GTP.

It belongs to the TRAFAC class translation factor GTPase superfamily. Classic translation factor GTPase family. EF-G/EF-2 subfamily.

It localises to the cytoplasm. In terms of biological role, catalyzes the GTP-dependent ribosomal translocation step during translation elongation. During this step, the ribosome changes from the pre-translocational (PRE) to the post-translocational (POST) state as the newly formed A-site-bound peptidyl-tRNA and P-site-bound deacylated tRNA move to the P and E sites, respectively. Catalyzes the coordinated movement of the two tRNA molecules, the mRNA and conformational changes in the ribosome. The chain is Elongation factor G from Streptococcus gordonii (strain Challis / ATCC 35105 / BCRC 15272 / CH1 / DL1 / V288).